The following is a 90-amino-acid chain: Large ribosomal subunit protein bL31B (90 aa).

This sequence belongs to the bacterial ribosomal protein bL31 family. Type B subfamily. Part of the 50S ribosomal subunit.

This is Large ribosomal subunit protein bL31B from Pseudomonas fluorescens (strain SBW25).